We begin with the raw amino-acid sequence, 202 residues long: MSRYLGSITKKSRRYGFSLLETEREFIKGKKRTYAPGQHGNKRVKLSGYGEQLQEKQKMMYLYGLNDRQFRRTFVIAKHMKGALTLNTFIALESRLDNLVYRMGFAPTRRAARQLVNHGHILLDGKKVTIPSCMVKLEQTIEVAPKSKDLPIVAAGASNTPCKFVDSDLKTKKGKYVRFPERDELPEGINEAYVVEWFNRLV.

The 64-residue stretch at S94 to A157 folds into the S4 RNA-binding domain.

Belongs to the universal ribosomal protein uS4 family. In terms of assembly, part of the 30S ribosomal subunit. Contacts protein S5. The interaction surface between S4 and S5 is involved in control of translational fidelity.

Its function is as follows. One of the primary rRNA binding proteins, it binds directly to 16S rRNA where it nucleates assembly of the body of the 30S subunit. With S5 and S12 plays an important role in translational accuracy. In Malacoplasma penetrans (strain HF-2) (Mycoplasma penetrans), this protein is Small ribosomal subunit protein uS4.